The primary structure comprises 505 residues: Protein nucleotidyltransferase YdiU (505 aa).

ATP-binding residues include glycine 102, glycine 104, arginine 105, lysine 125, aspartate 137, glycine 138, arginine 188, and arginine 195. Aspartate 264 acts as the Proton acceptor in catalysis. 2 residues coordinate Mg(2+): asparagine 265 and aspartate 274. Aspartate 274 contributes to the ATP binding site. The disordered stretch occupies residues 485 to 505 (FADYGKPPAPGEEVQQTFCGT).

This sequence belongs to the SELO family. The cofactor is Mg(2+). Mn(2+) serves as cofactor.

The enzyme catalyses L-seryl-[protein] + ATP = 3-O-(5'-adenylyl)-L-seryl-[protein] + diphosphate. The catalysed reaction is L-threonyl-[protein] + ATP = 3-O-(5'-adenylyl)-L-threonyl-[protein] + diphosphate. It catalyses the reaction L-tyrosyl-[protein] + ATP = O-(5'-adenylyl)-L-tyrosyl-[protein] + diphosphate. It carries out the reaction L-histidyl-[protein] + UTP = N(tele)-(5'-uridylyl)-L-histidyl-[protein] + diphosphate. The enzyme catalyses L-seryl-[protein] + UTP = O-(5'-uridylyl)-L-seryl-[protein] + diphosphate. The catalysed reaction is L-tyrosyl-[protein] + UTP = O-(5'-uridylyl)-L-tyrosyl-[protein] + diphosphate. In terms of biological role, nucleotidyltransferase involved in the post-translational modification of proteins. It can catalyze the addition of adenosine monophosphate (AMP) or uridine monophosphate (UMP) to a protein, resulting in modifications known as AMPylation and UMPylation. This Nitrobacter hamburgensis (strain DSM 10229 / NCIMB 13809 / X14) protein is Protein nucleotidyltransferase YdiU.